Reading from the N-terminus, the 86-residue chain is Putative membrane protein insertion efficiency factor (86 aa).

It belongs to the UPF0161 family.

The protein localises to the cell membrane. Its function is as follows. Could be involved in insertion of integral membrane proteins into the membrane. This chain is Putative membrane protein insertion efficiency factor, found in Streptococcus pyogenes serotype M1.